The following is a 196-amino-acid chain: MAYSTLFIIALTAVVTQASSTQKSNLTFTLADFVGDWQQTAGYNQDQVLEQGGLSSLFQALGVSVTPIQKVVLSGENGLKADIHVIIPYEGLSGFQMGLIEMIFKVVYPVDDHHFKIILHYGTLVIDGVTPNMIDYFGRPYPGIAVFDGKQITVTGTLWNGNKIYDERLINPDGSLLFRVTINGVTGWRLCENILA.

A signal peptide spans 1–27 (MAYSTLFIIALTAVVTQASSTQKSNLT).

In terms of assembly, heterotetramer of a catalytic 19 kDa and a non-catalytic 35 kDa subunit.

It is found in the secreted. It carries out the reaction coelenterazine + O2 = coelenteramide + hnu + CO2. Its activity is regulated as follows. Inhibited by micromolar Cu(2+). In terms of biological role, catalytic subunit of oplophorus-luciferin 2-monooxygenase. Oxidoreductase that converts coelenterazine (the oplophorus luciferin) to coelenteramide under emission of blue light with a maximum at 454 nm. Is also active with bisdeoxycoelenterazine. The polypeptide is Oplophorus-luciferin 2-monooxygenase catalytic subunit (Oplophorus gracilirostris (Luminous shrimp)).